Consider the following 206-residue polypeptide: Large ribosomal subunit protein mL62 (206 aa).

The transit peptide at 1-29 (MATAWCLPWTLRRAGAWLLTPPLRCPRRA) directs the protein to the mitochondrion.

The protein belongs to the prokaryotic/mitochondrial release factor family. Mitochondrion-specific ribosomal protein mL62 subfamily. Component of the mitochondrial 39S ribosomal subunit.

Its subcellular location is the mitochondrion. It catalyses the reaction an N-acyl-L-alpha-aminoacyl-tRNA + H2O = an N-acyl-L-amino acid + a tRNA + H(+). Essential peptidyl-tRNA hydrolase component of the mitochondrial large ribosomal subunit. Acts as a codon-independent translation release factor that has lost all stop codon specificity and directs the termination of translation in mitochondrion, possibly in case of abortive elongation. May be involved in the hydrolysis of peptidyl-tRNAs that have been prematurely terminated and thus in the recycling of stalled mitochondrial ribosomes. This is Large ribosomal subunit protein mL62 from Ailuropoda melanoleuca (Giant panda).